The primary structure comprises 248 residues: MYKLVLIRHGESVWNQENRFTGWQDVDLSEKGRAEALKGGKALREKGFSFDVAYTSVLKRAIKTLNFVLDEVDQVWLPVHKDWRLNERHYGALQGLNKAETAARHGEEQVKIWRRSYDTPPPPMEVSDPRHPSHDPRYKNVDAQLLPSNESLKDTVARFLPLWDGTIAPAVKSGKNVLIVAHGNSLRALMQHLEGMTPDEIMGVNMPTGIPMMYELDANLKVLKKEFIGDPDEVKAAIEAVANQGKAK.

Substrate contacts are provided by residues 8-15, 21-22, Arg-60, 87-90, Lys-98, and 114-115; these read RHGESVWN, TG, ERHY, and RR. His-9 acts as the Tele-phosphohistidine intermediate in catalysis. Glu-87 acts as the Proton donor/acceptor in catalysis. The interval 116–135 is disordered; that stretch reads SYDTPPPPMEVSDPRHPSHD. Residue 183 to 184 participates in substrate binding; that stretch reads GN.

It belongs to the phosphoglycerate mutase family. BPG-dependent PGAM subfamily. As to quaternary structure, homodimer.

The catalysed reaction is (2R)-2-phosphoglycerate = (2R)-3-phosphoglycerate. It participates in carbohydrate degradation; glycolysis; pyruvate from D-glyceraldehyde 3-phosphate: step 3/5. Functionally, catalyzes the interconversion of 2-phosphoglycerate and 3-phosphoglycerate. This is 2,3-bisphosphoglycerate-dependent phosphoglycerate mutase from Bdellovibrio bacteriovorus (strain ATCC 15356 / DSM 50701 / NCIMB 9529 / HD100).